Reading from the N-terminus, the 191-residue chain is Apoptosis regulator BHRF1 (191 aa).

Residues 1–18 form an interaction with host VRK2 region; it reads MAYSTREILLALCIRDSR. Asn-22 carries an N-linked (GlcNAc...) asparagine; by host glycan. The short motif at 89-109 is the BH1 element; it reads EIFHRGDPSLGRALAWMAWCM. An interaction with host VRK2 region spans residues 89-142; the sequence is EIFHRGDPSLGRALAWMAWCMHACRTLCCNQSTPYYVVDLSVRGMLEASEGLDG. Residue Asn-118 is glycosylated (N-linked (GlcNAc...) asparagine; by host). Residues 142 to 157 carry the BH2 motif; the sequence is GWIHQQGGWSTLIEDN. A helical transmembrane segment spans residues 166-186; it reads WTLFLAGLTLSLLVICSYLFI.

It belongs to the Bcl-2 family. As to quaternary structure, interacts with isoform 1 of host VRK2; this interaction is involved in protecting cells from apoptosis. Interacts with host PRA1; this interaction seems to modulate BHRF1 anti-apoptotic activity. Interacts with host BCL2L11. Interacts with host BAD and BBC3. Interacts with BALF1; BALF1 acting as a negative regulator of the survival function of BHRF1. Interacts with host BECN1.

Its subcellular location is the host membrane. The protein resides in the host mitochondrion. Functionally, prevents premature death of the host cell during virus production, which would otherwise reduce the amount of progeny virus. Acts as a host B-cell leukemia/lymphoma 2 (Bcl-2) homolog, and interacts with pro-apoptotic proteins to prevent mitochondria permeabilization, release of cytochrome c and subsequent apoptosis of the host cell. In addition, plays a role in the inhibiton of host BECN1-mediated starvation-induced autophagy without affecting basal levels of autophagy. The protein is Apoptosis regulator BHRF1 of Homo sapiens (Human).